The chain runs to 719 residues: Penicillin-binding protein 1A (719 aa).

A transglycosylase region spans residues 62–223; it reads LIADLGSERR…NQYDPYSHPE (162 aa). The active-site Proton donor; for transglycosylase activity is the E91. The interval 297–611 is transpeptidase; it reads DVYTNVDQEA…RLTPLVGNGL (315 aa). Residue S370 is the Acyl-ester intermediate; for transpeptidase activity of the active site. Positions 652–719 are disordered; that stretch reads ARSTWSSPAP…QNQNPQPAQP (68 aa). Over residues 654–719 the composition is skewed to low complexity; it reads STWSSPAPQQ…QNQNPQPAQP (66 aa).

It in the N-terminal section; belongs to the glycosyltransferase 51 family. The protein in the C-terminal section; belongs to the transpeptidase family. Interacts with MreC in the elongasome.

It localises to the secreted. The enzyme catalyses [GlcNAc-(1-&gt;4)-Mur2Ac(oyl-L-Ala-gamma-D-Glu-L-Lys-D-Ala-D-Ala)](n)-di-trans,octa-cis-undecaprenyl diphosphate + beta-D-GlcNAc-(1-&gt;4)-Mur2Ac(oyl-L-Ala-gamma-D-Glu-L-Lys-D-Ala-D-Ala)-di-trans,octa-cis-undecaprenyl diphosphate = [GlcNAc-(1-&gt;4)-Mur2Ac(oyl-L-Ala-gamma-D-Glu-L-Lys-D-Ala-D-Ala)](n+1)-di-trans,octa-cis-undecaprenyl diphosphate + di-trans,octa-cis-undecaprenyl diphosphate + H(+). It carries out the reaction Preferential cleavage: (Ac)2-L-Lys-D-Ala-|-D-Ala. Also transpeptidation of peptidyl-alanyl moieties that are N-acyl substituents of D-alanine.. Its pathway is cell wall biogenesis; peptidoglycan biosynthesis. In terms of biological role, cell wall formation. In Streptococcus pneumoniae (strain ATCC BAA-255 / R6), this protein is Penicillin-binding protein 1A (pbpA).